Here is a 273-residue protein sequence, read N- to C-terminus: MTLDLQTTIEKAWESRANLSPADASAEVREAVEHTIDALDQGRLRVADKSSGEWIVHQWIKKAVLLSFRLQDNEVMGEAPLTFYDKVQTKFADFGAAAFKAGGYRVVPPAVARRGSFIGRNVVLMPSYVNIGAYVDEGTMVDTWATVGSCAQIGKNVHLSGGVGIGGVLEPLQANPTIIEDNCFIGARSEVVEGVVVEENSVLAMGVFLSQSTKIFDRATGTITYGRVPSGSVVVPGSLPSADGSHSLACAVIVKRVDAQTRAKTSINDLLRA.

R105 and D142 together coordinate substrate.

Belongs to the transferase hexapeptide repeat family. In terms of assembly, homotrimer.

The protein resides in the cytoplasm. The catalysed reaction is (S)-2,3,4,5-tetrahydrodipicolinate + succinyl-CoA + H2O = (S)-2-succinylamino-6-oxoheptanedioate + CoA. The protein operates within amino-acid biosynthesis; L-lysine biosynthesis via DAP pathway; LL-2,6-diaminopimelate from (S)-tetrahydrodipicolinate (succinylase route): step 1/3. In Bordetella avium (strain 197N), this protein is 2,3,4,5-tetrahydropyridine-2,6-dicarboxylate N-succinyltransferase.